The following is an 85-amino-acid chain: MAHKKGVGSSRNGRDSDGQRLGCKKFGGEAVKAGNIIYRQHGTKIHPGNNVGLGKDYTLFALIEGVVKFERMGKDRKKVSVYPAN.

The tract at residues 1–21 is disordered; it reads MAHKKGVGSSRNGRDSDGQRL.

It belongs to the bacterial ribosomal protein bL27 family.

The polypeptide is Large ribosomal subunit protein bL27 (Citrifermentans bemidjiense (strain ATCC BAA-1014 / DSM 16622 / JCM 12645 / Bem) (Geobacter bemidjiensis)).